The following is a 236-amino-acid chain: UPF0257 lipoprotein YnfC (236 aa).

The N-terminal stretch at 1–16 is a signal peptide; the sequence is MKYKLLPCLLAILLTG. C17 carries N-palmitoyl cysteine lipidation. Residue C17 is the site of S-diacylglycerol cysteine attachment.

The protein belongs to the UPF0257 family.

The protein localises to the cell membrane. In Escherichia coli O157:H7, this protein is UPF0257 lipoprotein YnfC.